Here is a 251-residue protein sequence, read N- to C-terminus: Chlorophyll a-b binding protein 4, chloroplastic (251 aa).

Serine 35 is subject to Phosphoserine. Tryptophan 57 is a chlorophyll b binding site. Residues phenylalanine 77 and glutamate 96 each contribute to the chlorophyll a site. Position 101 (arginine 101) interacts with chlorophyll b. Helical transmembrane passes span 102–122 (WAML…IGII) and 135–155 (YFAS…YVEI). Chlorophyll b contacts are provided by serine 138, valine 144, glutamate 154, and arginine 157. Residues lysine 204, glutamate 205, asparagine 208, arginine 210, glutamine 222, and histidine 237 each contribute to the chlorophyll a site.

This sequence belongs to the light-harvesting chlorophyll a/b-binding (LHC) protein family. The LHC complex consists of chlorophyll a-b binding proteins. Red-emitting heterodimer with LHCA1. It depends on Binds at least 14 chlorophylls (8 Chl-a and 6 Chl-b) and carotenoids such as lutein and neoxanthin. as a cofactor. Post-translationally, photoregulated by reversible phosphorylation of its threonine residues.

It is found in the plastid. The protein localises to the chloroplast thylakoid membrane. The light-harvesting complex (LHC) functions as a light receptor, it captures and delivers excitation energy to photosystems with which it is closely associated. The protein is Chlorophyll a-b binding protein 4, chloroplastic of Arabidopsis thaliana (Mouse-ear cress).